We begin with the raw amino-acid sequence, 607 residues long: Potassium transporter KimA (607 aa).

Over 1-30 (MYHSIKRFLIGKPLKSQAAGEQKLTKLKAL) the chain is Cytoplasmic. A helical membrane pass occupies residues 31-49 (AMLSSDALSSVAYGTEQIL). The K(+) site is built by D36 and Y43. Topologically, residues 50-62 (IILATISAAAFWY) are extracellular. A helical transmembrane segment spans residues 63 to 84 (SIPIAVGVLILLLALILSYRQI). Over 85-105 (IYAYPQGGGAYIVSKENLGEK) the chain is Cytoplasmic. Residues 106–134 (PGLIAGGSLLVDYILTVAVSISAGTDAIT) form a helical membrane-spanning segment. K(+) is bound by residues D117 and S125. Residues 135 to 142 (SAFPALHD) lie on the Extracellular side of the membrane. Residues 143–162 (YHVPIAIFLVLVIMILNLRG) form a helical membrane-spanning segment. Residues 163-166 (LSES) are Cytoplasmic-facing. The chain crosses the membrane as a helical span at residues 167 to 190 (ASILAYPVYLFVVALLVLIAVGLF). Residues 191-214 (KLMTGQIDQPAHHTSLGTPVAGIT) lie on the Extracellular side of the membrane. Residues 215–238 (LFLLLKAFSSGCSALTGVEAISNA) form a helical membrane-spanning segment. The Cytoplasmic segment spans residues 239 to 249 (IPAFKNPPARN). The chain crosses the membrane as a helical span at residues 250-271 (AARTLAMMGILLAILFSGITVL). The Extracellular segment spans residues 272 to 298 (AYGYGTAPKPDETVVSQIASETFGRNV). A helical membrane pass occupies residues 299–323 (FYYVIQGVTSLILVLAANTGFSAFP). The Cytoplasmic segment spans residues 324–347 (QLAFNLARDQYMPRMFTVRGDRLG). The helical transmembrane segment at 348-366 (FSNGIIFLGFASIVLIILF) threads the bilayer. Over 367–372 (GGQTEH) the chain is Extracellular. The helical transmembrane segment at 373–393 (LIPLYAVGVFIPFTLSQTGMC) threads the bilayer. Topologically, residues 394–405 (MKWIKQKPKGWI) are cytoplasmic. The chain crosses the membrane as a helical span at residues 406-428 (GKMLINSCGALISFMVLSILFVT). Topologically, residues 429 to 431 (KFN) are extracellular. The helical transmembrane segment at 432–447 (VVWPVLIFMPIVVLLF) threads the bilayer. The Cytoplasmic portion of the chain corresponds to 448 to 607 (FAIKNHYTAV…VATLPYHFKK (160 aa)).

This sequence belongs to the amino acid-polyamine-organocation (APC) superfamily. Homodimer.

The protein resides in the cell membrane. The catalysed reaction is K(+)(in) + H(+)(in) = K(+)(out) + H(+)(out). Potassium uptake increases at lower external pH and is abolished by the proton ionophore carbonyl cyanide m-chlorophenylhydrazone (CCCP). Binds cyclic di-AMP (c-di-AMP), which inhibits the potassium transport activity. Functionally, high-affinity potassium transporter. Functions as a K(+)/H(+) symporter. The protein is Potassium transporter KimA of Bacillus subtilis (strain 168).